The sequence spans 58 residues: Small ribosomal subunit protein bS21 (58 aa).

The segment at 36-58 is disordered; sequence EHYEKPSVKRKKKSEAARRRKYR. The segment covering 43–58 has biased composition (basic residues); the sequence is VKRKKKSEAARRRKYR.

It belongs to the bacterial ribosomal protein bS21 family.

The chain is Small ribosomal subunit protein bS21 from Symbiobacterium thermophilum (strain DSM 24528 / JCM 14929 / IAM 14863 / T).